We begin with the raw amino-acid sequence, 202 residues long: Small ribosomal subunit protein uS4 (202 aa).

The segment covering 1–13 (MSRYRGPRLRITR) has biased composition (basic residues). The interval 1–43 (MSRYRGPRLRITRRLGDLPGLTRKAAKRSHPPGQHGQARRKRS) is disordered. The region spanning 90-152 (NRLDNVCFRL…KASKQLAQAN (63 aa)) is the S4 RNA-binding domain.

Belongs to the universal ribosomal protein uS4 family. As to quaternary structure, part of the 30S ribosomal subunit. Contacts protein S5. The interaction surface between S4 and S5 is involved in control of translational fidelity.

Its function is as follows. One of the primary rRNA binding proteins, it binds directly to 16S rRNA where it nucleates assembly of the body of the 30S subunit. In terms of biological role, with S5 and S12 plays an important role in translational accuracy. The polypeptide is Small ribosomal subunit protein uS4 (Prochlorococcus marinus (strain NATL2A)).